The chain runs to 133 residues: Profilin-3 (133 aa).

This sequence belongs to the profilin family. As to quaternary structure, occurs in many kinds of cells as a complex with monomeric actin in a 1:1 ratio.

It is found in the cytoplasm. The protein resides in the cytoskeleton. Binds to actin and affects the structure of the cytoskeleton. At high concentrations, profilin prevents the polymerization of actin, whereas it enhances it at low concentrations. By binding to PIP2, it inhibits the formation of IP3 and DG. The polypeptide is Profilin-3 (Ambrosia artemisiifolia (Common ragweed)).